The chain runs to 172 residues: Disulfide bond formation protein B (172 aa).

The Cytoplasmic portion of the chain corresponds to 1-11; it reads MNPFRWSFRAQ. The chain crosses the membrane as a helical span at residues 12–28; it reads FLLGFLACAGLLAYAIY. Residues 29 to 46 are Periplasmic-facing; it reads VQLHLGLEPCPLCIFQRI. The cysteines at positions 38 and 41 are disulfide-linked. A helical membrane pass occupies residues 47–63; it reads AFAALAVFFLIGALHGP. Topologically, residues 64 to 70 are cytoplasmic; sequence RAAGARK. A helical membrane pass occupies residues 71-88; sequence VYGVLSFIAAGVGMGIGA. Over 89 to 145 the chain is Periplasmic; that stretch reads RHVWVQIRPKDMMSSCGPPLSFLSETMGPFEVFRTVLTGTGDCGNIDWRFLGLSMPM. A disulfide bond links cysteine 104 and cysteine 131. A helical transmembrane segment spans residues 146 to 164; the sequence is WSMVWFVGLALWALSAGFK. Over 165 to 172 the chain is Cytoplasmic; the sequence is ARRSSLHH.

The protein belongs to the DsbB family.

Its subcellular location is the cell inner membrane. Required for disulfide bond formation in some periplasmic proteins. Acts by oxidizing the DsbA protein. The chain is Disulfide bond formation protein B from Xanthomonas oryzae pv. oryzae (strain MAFF 311018).